Here is a 185-residue protein sequence, read N- to C-terminus: ATP synthase subunit delta (185 aa).

This sequence belongs to the ATPase delta chain family. F-type ATPases have 2 components, F(1) - the catalytic core - and F(0) - the membrane proton channel. F(1) has five subunits: alpha(3), beta(3), gamma(1), delta(1), epsilon(1). F(0) has three main subunits: a(1), b(2) and c(10-14). The alpha and beta chains form an alternating ring which encloses part of the gamma chain. F(1) is attached to F(0) by a central stalk formed by the gamma and epsilon chains, while a peripheral stalk is formed by the delta and b chains.

It is found in the cell inner membrane. Its function is as follows. F(1)F(0) ATP synthase produces ATP from ADP in the presence of a proton or sodium gradient. F-type ATPases consist of two structural domains, F(1) containing the extramembraneous catalytic core and F(0) containing the membrane proton channel, linked together by a central stalk and a peripheral stalk. During catalysis, ATP synthesis in the catalytic domain of F(1) is coupled via a rotary mechanism of the central stalk subunits to proton translocation. In terms of biological role, this protein is part of the stalk that links CF(0) to CF(1). It either transmits conformational changes from CF(0) to CF(1) or is implicated in proton conduction. This is ATP synthase subunit delta from Phocaeicola vulgatus (strain ATCC 8482 / DSM 1447 / JCM 5826 / CCUG 4940 / NBRC 14291 / NCTC 11154) (Bacteroides vulgatus).